A 163-amino-acid chain; its full sequence is Protein-export protein SecB (163 aa).

It belongs to the SecB family. As to quaternary structure, homotetramer, a dimer of dimers. One homotetramer interacts with 1 SecA dimer.

The protein resides in the cytoplasm. One of the proteins required for the normal export of preproteins out of the cell cytoplasm. It is a molecular chaperone that binds to a subset of precursor proteins, maintaining them in a translocation-competent state. It also specifically binds to its receptor SecA. The chain is Protein-export protein SecB from Caulobacter vibrioides (strain ATCC 19089 / CIP 103742 / CB 15) (Caulobacter crescentus).